The sequence spans 896 residues: Valine--tRNA ligase (896 aa).

A 'HIGH' region motif is present at residues 43–53; it reads PNVTGSLHIGH. The 'KMSKS' region motif lies at 545–549; sequence KMSKS. Lys-548 is an ATP binding site. Residues 831-857 are a coiled coil; the sequence is DLDAERARLAKGIAAAEKERDGLAARL.

Belongs to the class-I aminoacyl-tRNA synthetase family. ValS type 1 subfamily. In terms of assembly, monomer.

It localises to the cytoplasm. It catalyses the reaction tRNA(Val) + L-valine + ATP = L-valyl-tRNA(Val) + AMP + diphosphate. Its function is as follows. Catalyzes the attachment of valine to tRNA(Val). As ValRS can inadvertently accommodate and process structurally similar amino acids such as threonine, to avoid such errors, it has a 'posttransfer' editing activity that hydrolyzes mischarged Thr-tRNA(Val) in a tRNA-dependent manner. This chain is Valine--tRNA ligase, found in Rhizorhabdus wittichii (strain DSM 6014 / CCUG 31198 / JCM 15750 / NBRC 105917 / EY 4224 / RW1) (Sphingomonas wittichii).